A 367-amino-acid chain; its full sequence is UDP-N-acetylglucosamine--N-acetylmuramyl-(pentapeptide) pyrophosphoryl-undecaprenol N-acetylglucosamine transferase (367 aa).

UDP-N-acetyl-alpha-D-glucosamine is bound by residues 15 to 17, N127, R163, S191, I249, and Q294; that span reads TGG.

This sequence belongs to the glycosyltransferase 28 family. MurG subfamily.

Its subcellular location is the cell inner membrane. It carries out the reaction di-trans,octa-cis-undecaprenyl diphospho-N-acetyl-alpha-D-muramoyl-L-alanyl-D-glutamyl-meso-2,6-diaminopimeloyl-D-alanyl-D-alanine + UDP-N-acetyl-alpha-D-glucosamine = di-trans,octa-cis-undecaprenyl diphospho-[N-acetyl-alpha-D-glucosaminyl-(1-&gt;4)]-N-acetyl-alpha-D-muramoyl-L-alanyl-D-glutamyl-meso-2,6-diaminopimeloyl-D-alanyl-D-alanine + UDP + H(+). The protein operates within cell wall biogenesis; peptidoglycan biosynthesis. In terms of biological role, cell wall formation. Catalyzes the transfer of a GlcNAc subunit on undecaprenyl-pyrophosphoryl-MurNAc-pentapeptide (lipid intermediate I) to form undecaprenyl-pyrophosphoryl-MurNAc-(pentapeptide)GlcNAc (lipid intermediate II). This chain is UDP-N-acetylglucosamine--N-acetylmuramyl-(pentapeptide) pyrophosphoryl-undecaprenol N-acetylglucosamine transferase, found in Burkholderia lata (strain ATCC 17760 / DSM 23089 / LMG 22485 / NCIMB 9086 / R18194 / 383).